A 645-amino-acid polypeptide reads, in one-letter code: Threonine--tRNA ligase (645 aa).

One can recognise a TGS domain in the interval 1 to 63 (MEQINIQFPD…ETDGSIEIVT (63 aa)). Residues 242 to 540 (DHRKIGKELE…LTEETKGAFP (299 aa)) form a catalytic region. 3 residues coordinate Zn(2+): C336, H387, and H517.

It belongs to the class-II aminoacyl-tRNA synthetase family. In terms of assembly, homodimer. It depends on Zn(2+) as a cofactor.

The protein localises to the cytoplasm. It catalyses the reaction tRNA(Thr) + L-threonine + ATP = L-threonyl-tRNA(Thr) + AMP + diphosphate + H(+). Catalyzes the attachment of threonine to tRNA(Thr) in a two-step reaction: L-threonine is first activated by ATP to form Thr-AMP and then transferred to the acceptor end of tRNA(Thr). Also edits incorrectly charged L-seryl-tRNA(Thr). The polypeptide is Threonine--tRNA ligase (Staphylococcus aureus (strain JH1)).